Consider the following 427-residue polypeptide: Serine hydroxymethyltransferase (427 aa).

Residues Leu127 and Gly131–Leu133 contribute to the (6S)-5,6,7,8-tetrahydrofolate site. Lys236 bears the N6-(pyridoxal phosphate)lysine mark.

Belongs to the SHMT family. Homodimer. Pyridoxal 5'-phosphate is required as a cofactor.

It localises to the cytoplasm. It catalyses the reaction (6R)-5,10-methylene-5,6,7,8-tetrahydrofolate + glycine + H2O = (6S)-5,6,7,8-tetrahydrofolate + L-serine. It participates in one-carbon metabolism; tetrahydrofolate interconversion. Its pathway is amino-acid biosynthesis; glycine biosynthesis; glycine from L-serine: step 1/1. Catalyzes the reversible interconversion of serine and glycine with tetrahydrofolate (THF) serving as the one-carbon carrier. This reaction serves as the major source of one-carbon groups required for the biosynthesis of purines, thymidylate, methionine, and other important biomolecules. Also exhibits THF-independent aldolase activity toward beta-hydroxyamino acids, producing glycine and aldehydes, via a retro-aldol mechanism. The sequence is that of Serine hydroxymethyltransferase from Paramagnetospirillum magneticum (strain ATCC 700264 / AMB-1) (Magnetospirillum magneticum).